Here is a 396-residue protein sequence, read N- to C-terminus: Methionine import ATP-binding protein MetN 2 (396 aa).

One can recognise an ABC transporter domain in the interval 41-280 (VSFELVGKVF…PRHGATRALL (240 aa)). 77–84 (GRSGAGKS) serves as a coordination point for ATP.

Belongs to the ABC transporter superfamily. Methionine importer (TC 3.A.1.24) family. In terms of assembly, the complex is composed of two ATP-binding proteins (MetN), two transmembrane proteins (MetI) and a solute-binding protein (MetQ).

The protein resides in the cell inner membrane. It carries out the reaction L-methionine(out) + ATP + H2O = L-methionine(in) + ADP + phosphate + H(+). It catalyses the reaction D-methionine(out) + ATP + H2O = D-methionine(in) + ADP + phosphate + H(+). Part of the ABC transporter complex MetNIQ involved in methionine import. Responsible for energy coupling to the transport system. This chain is Methionine import ATP-binding protein MetN 2, found in Burkholderia pseudomallei (strain 1710b).